The sequence spans 145 residues: Actin-related protein 4A (145 aa).

The tract at residues 47–66 is disordered; that stretch reads IDDAANTTEDAKESDKEKGK. The segment covering 55–64 has biased composition (basic and acidic residues); sequence EDAKESDKEK.

This sequence belongs to the actin family. ARP4 subfamily. Expressed in roots, leaves and flowers.

This is Actin-related protein 4A (ARP4A) from Arabidopsis thaliana (Mouse-ear cress).